The sequence spans 106 residues: ATP-dependent Clp protease adapter protein ClpS (106 aa).

The protein belongs to the ClpS family. As to quaternary structure, binds to the N-terminal domain of the chaperone ClpA.

Involved in the modulation of the specificity of the ClpAP-mediated ATP-dependent protein degradation. The chain is ATP-dependent Clp protease adapter protein ClpS from Methylococcus capsulatus (strain ATCC 33009 / NCIMB 11132 / Bath).